Reading from the N-terminus, the 407-residue chain is MAYQEPNKDGFYGKFGGRFVPETLMTAVLELEKAYRESQADPSFQEELNQLLRQYVGRETPLYYAKNLTQHIGGAKIYLKREDLNHTGAHKINNALGQVWLAKRMGKKKIIAETGAGQHGVATATAAALFNMECIIYMGEEDVKRQALNVFRMELLGAKVEAVTDGSRVLKDAVNAALRSWVANIDDTHYILGSTLGPHPFPEIVRDFQSVIGREAKQQYRDLTGQNLPDALVACVGGGSNAIGLFHPFVEDESVAMYGAEAAGLGVDTEHHAATLTKGRPGVLHGSLMDVLQDAHGQILEAFSISAGLDYPGIGPEHSHYHDIKRASYVPVTDEEALEGFQLLSRVEGIIPALESSHAIAFAVKLAKELGPEKSMIVCLSGRGDKDVVQVKDRLEADAAKKGEAHA.

K91 is subject to N6-(pyridoxal phosphate)lysine.

It belongs to the TrpB family. Tetramer of two alpha and two beta chains. Requires pyridoxal 5'-phosphate as cofactor.

The catalysed reaction is (1S,2R)-1-C-(indol-3-yl)glycerol 3-phosphate + L-serine = D-glyceraldehyde 3-phosphate + L-tryptophan + H2O. It participates in amino-acid biosynthesis; L-tryptophan biosynthesis; L-tryptophan from chorismate: step 5/5. Functionally, the beta subunit is responsible for the synthesis of L-tryptophan from indole and L-serine. The sequence is that of Tryptophan synthase beta chain from Streptococcus pneumoniae serotype 2 (strain D39 / NCTC 7466).